The chain runs to 65 residues: MPGVRVKEAEPFELALKKFKKQCEKAGILSEVRKREHYEKPSIKKKKKAIAARKRALKKQRKMID.

Belongs to the bacterial ribosomal protein bS21 family.

This chain is Small ribosomal subunit protein bS21, found in Geotalea daltonii (strain DSM 22248 / JCM 15807 / FRC-32) (Geobacter daltonii).